The sequence spans 52 residues: Thiocillin (52 aa).

Residues 1–38 (MSEIKKALNTLEIEDFDAIEMVDVDAMPENEALEIMGA) constitute a propeptide that is removed on maturation. The segment at residues 39-40 (SC) is a cross-link (thiazole-4-carboxylic acid (Ser-Cys)). A cross-link (pyridine-2,5-dicarboxylic acid (Ser-Cys) (with S-48)) is located at residues 39–47 (SCTTCVCTC). Positions 39–48 (SCTTCVCTCS) form a cross-link, pyridine-2,5-dicarboxylic acid (Ser-Ser) (with C-47). Position 42 is a (Z)-2,3-didehydrobutyrine (T42). Residues 42–43 (TC) constitute a cross-link (thiazole-4-carboxylic acid (Thr-Cys)). V44 is subject to 3-hydroxyvaline (Val); partial. Residues 44-45 (VC) constitute a cross-link (thiazole-4-carboxylic acid (Val-Cys)). T46 carries the O-methylthreonine; partial modification. The segment at residues 46–47 (TC) is a cross-link (thiazole-4-carboxylic acid (Thr-Cys)). The thiazole-4-carboxylic acid (Ser-Cys) cross-link spans 48–49 (SC). Positions 49–50 (CC) form a cross-link, thiazole-4-carboxylic acid (Cys-Cys). T51 carries the (Z)-2,3-didehydrobutyrine modification. Residue T52 is modified to 1-amino-2-propanone; alternate. T52 carries the decarboxylated threonine; alternate modification.

This sequence belongs to the thiocillin family. Maturation of thiazole and oxazole containing antibiotics involves the enzymatic condensation of a Cys, Ser or Thr with the alpha-carbonyl of the preceding amino acid to form a thioether or ether bond, then dehydration to form a double bond with the alpha-amino nitrogen. Thiazoline or oxazoline ring are dehydrogenated to form thiazole or oxazole rings. Post-translationally, maturation of pyridinyl containing antibiotics involves the cross-linking of a Ser and a Cys-Ser pair usually separated by 7 or 8 residues along the peptide chain. The Ser residues are dehydrated to didehydroalanines, then bonded between their beta carbons. The alpha carbonyl of the Cys condenses with alpha carbon of the first Ser to form a pyridinyl ring. The ring may be multiply dehydrogenated to form a pyridine ring with loss of the amino nitrogen of the first Ser. In terms of processing, the 8 possible modification isomers, differing in the presence of modifications at three positions, have been characterized in PubMed:19196969. Val-44 is modified to 3-hydroxyvaline in forms thiocillin I, thiocillin II, YM-266183, and YM-266184. Thr-46 is modified to O-methylthreonine in forms thiocillin II, thiocillin III, thiocillin IV, and YM-266184. Thr-52 is decarboxylated to (R)-1-aminopropan-2-ol in forms micrococcin P1, thiocillin I, thiocillin II, and thiocillin III. Thr-52 is decarboxylated and oxidized to 1-amino-2-propanone in forms micrococcin P2, YM-266183, YM-266184. and thiocillin IV. The structure of 2,3-didehydrobutyrines is not discussed in PubMed:19196969. However, in Fig. 3 the residues are diagrammed as Z-isomers.

The protein resides in the secreted. Has bacteriocidal activity against Gram-positive bacteria, but not against Gram-negative bacteria. Inhibits bacterial protein biosynthesis by acting on the elongation factor Tu (EF-Tu). This chain is Thiocillin, found in Bacillus cereus (strain ATCC 14579 / DSM 31 / CCUG 7414 / JCM 2152 / NBRC 15305 / NCIMB 9373 / NCTC 2599 / NRRL B-3711).